Consider the following 259-residue polypeptide: Tryptophan synthase alpha chain (259 aa).

Residues glutamate 52 and aspartate 63 each act as proton acceptor in the active site.

Belongs to the TrpA family. As to quaternary structure, tetramer of two alpha and two beta chains.

It carries out the reaction (1S,2R)-1-C-(indol-3-yl)glycerol 3-phosphate + L-serine = D-glyceraldehyde 3-phosphate + L-tryptophan + H2O. Its pathway is amino-acid biosynthesis; L-tryptophan biosynthesis; L-tryptophan from chorismate: step 5/5. In terms of biological role, the alpha subunit is responsible for the aldol cleavage of indoleglycerol phosphate to indole and glyceraldehyde 3-phosphate. This Streptococcus gordonii (strain Challis / ATCC 35105 / BCRC 15272 / CH1 / DL1 / V288) protein is Tryptophan synthase alpha chain.